The sequence spans 1372 residues: Serine protease pic autotransporter (1372 aa).

Residues 1-55 form the signal peptide; sequence MNKVYSLKYCPVTGGLIAVSELARRVIKKTCRRLTHILLAGIPAICLCYSQISQA. The 246-residue stretch at 56–301 folds into the Peptidase S6 domain; that stretch reads GIVRSDIAYQ…NVIPTDYLNQ (246 aa). Catalysis depends on charge relay system residues His127, Asp155, and Ser258. The region spanning 1106–1372 is the Autotransporter domain; it reads DTNGDAGAWA…AVNANFRYMF (267 aa).

In terms of processing, cleaved to release the mature protein from the outer membrane.

It is found in the periplasm. Its subcellular location is the secreted. It localises to the cell surface. The protein resides in the cell outer membrane. Its function is as follows. Involved in intestinal colonization, displays in vitro mucinolytic activity, serum resistance, and hemagglutination. Important to penetrate the intestinal mucus layer. The sequence is that of Serine protease pic autotransporter (pic) from Escherichia coli O44:H18 (strain 042 / EAEC).